The primary structure comprises 994 residues: Glutamate [NMDA] receptor subunit 1 (994 aa).

The N-terminal stretch at 1-23 (MAADGFVYRWLLFGTTIVLLAEA) is a signal peptide. Topologically, residues 24–570 (AQRHTASDNP…TLVSFLQPFS (547 aa)) are extracellular. Asn255, Asn311, Asn342, Asn394, Asn451, Asn478, and Asn498 each carry an N-linked (GlcNAc...) asparagine glycan. Glycine is bound by residues 527-529 (PLT) and Arg534. Residues 571–591 (NTLWILVMVSVHVVALVLYLL) form a helical membrane-spanning segment. Topologically, residues 592 to 648 (DRFSPFGRFKLSHSDSNEEKALNLSSAVWFAWGVLLNSGIGEGTPRSFSARVLGMVW) are cytoplasmic. A helical membrane pass occupies residues 649–669 (AGFAMIIVASYTANLAAFLVL). At 670 to 828 (ERPKTKLSGI…KTPNTLGLKN (159 aa)) the chain is on the extracellular side. Asn690 carries an N-linked (GlcNAc...) asparagine glycan. Glycine-binding residues include Ser700 and Asp744. A helical membrane pass occupies residues 829 to 849 (MAGVFILVGVGIAGGVGLIII). At 850–994 (EVIYKKHQVK…YTSDVSHLVV (145 aa)) the chain is on the cytoplasmic side. The segment at 971–994 (RPQQNMLPPRYSPGYTSDVSHLVV) is disordered. A compositionally biased stretch (polar residues) spans 984–994 (GYTSDVSHLVV).

This sequence belongs to the glutamate-gated ion channel (TC 1.A.10.1) family. Forms a heteromeric NMDA channel with Nmdar2.

The protein localises to the cell membrane. Its subcellular location is the postsynaptic cell membrane. It localises to the postsynaptic density. Its function is as follows. NMDA receptor subtype of glutamate-gated ion channels with high calcium permeability and voltage-dependent sensitivity to magnesium. Mediated by glycine. This protein plays a key role in synaptic plasticity, synaptogenesis, excitotoxicity, memory acquisition and learning. It mediates neuronal functions in glutamate neurotransmission. Is involved in the cell surface targeting of NMDA receptors. Plays a role in associative learning and in long-term memory consolidation. The chain is Glutamate [NMDA] receptor subunit 1 from Drosophila ananassae (Fruit fly).